The chain runs to 245 residues: Adenosine 5'-phosphosulfate reductase (245 aa).

[4Fe-4S] cluster contacts are provided by Cys124, Cys125, Cys205, and Cys208. Cys231 acts as the Nucleophile; cysteine thiosulfonate intermediate in catalysis.

It belongs to the PAPS reductase family. CysH subfamily. Requires [4Fe-4S] cluster as cofactor.

It localises to the cytoplasm. The enzyme catalyses [thioredoxin]-disulfide + sulfite + AMP + 2 H(+) = adenosine 5'-phosphosulfate + [thioredoxin]-dithiol. The protein operates within sulfur metabolism; hydrogen sulfide biosynthesis; sulfite from sulfate. Catalyzes the formation of sulfite from adenosine 5'-phosphosulfate (APS) using thioredoxin as an electron donor. This chain is Adenosine 5'-phosphosulfate reductase, found in Chelativorans sp. (strain BNC1).